A 157-amino-acid chain; its full sequence is Nucleoside deoxyribosyltransferase (157 aa).

The active-site Nucleophile is Glu-98.

Belongs to the nucleoside deoxyribosyltransferase family. Homohexamer.

It carries out the reaction 2-deoxy-D-ribosyl-base(1) + base(2) = 2-deoxy-D-ribosyl-base(2) + base(1).. It functions in the pathway nucleotide metabolism; nucleotide salvage pathway. Functionally, catalyzes the cleavage of the glycosidic bond of 2'-deoxyribonucleosides and the transfer of the deoxyribosyl moiety to an acceptor purine or pyrimidine base. The polypeptide is Nucleoside deoxyribosyltransferase (ntd) (Lactobacillus leichmannii).